Here is a 170-residue protein sequence, read N- to C-terminus: Adenine phosphoribosyltransferase (170 aa).

This sequence belongs to the purine/pyrimidine phosphoribosyltransferase family. As to quaternary structure, homodimer.

The protein resides in the cytoplasm. It catalyses the reaction AMP + diphosphate = 5-phospho-alpha-D-ribose 1-diphosphate + adenine. It functions in the pathway purine metabolism; AMP biosynthesis via salvage pathway; AMP from adenine: step 1/1. Functionally, catalyzes a salvage reaction resulting in the formation of AMP, that is energically less costly than de novo synthesis. The chain is Adenine phosphoribosyltransferase from Bacillus velezensis (strain DSM 23117 / BGSC 10A6 / LMG 26770 / FZB42) (Bacillus amyloliquefaciens subsp. plantarum).